A 162-amino-acid chain; its full sequence is NADH-quinone oxidoreductase subunit I (162 aa).

2 consecutive 4Fe-4S ferredoxin-type domains span residues Leu-53–Glu-83 and Thr-93–Asn-122. Cys-63, Cys-66, Cys-69, Cys-73, Cys-102, Cys-105, Cys-108, and Cys-112 together coordinate [4Fe-4S] cluster.

It belongs to the complex I 23 kDa subunit family. NDH-1 is composed of 14 different subunits. Subunits NuoA, H, J, K, L, M, N constitute the membrane sector of the complex. The cofactor is [4Fe-4S] cluster.

Its subcellular location is the cell inner membrane. The enzyme catalyses a quinone + NADH + 5 H(+)(in) = a quinol + NAD(+) + 4 H(+)(out). Its function is as follows. NDH-1 shuttles electrons from NADH, via FMN and iron-sulfur (Fe-S) centers, to quinones in the respiratory chain. The immediate electron acceptor for the enzyme in this species is believed to be ubiquinone. Couples the redox reaction to proton translocation (for every two electrons transferred, four hydrogen ions are translocated across the cytoplasmic membrane), and thus conserves the redox energy in a proton gradient. The chain is NADH-quinone oxidoreductase subunit I from Maricaulis maris (strain MCS10) (Caulobacter maris).